A 263-amino-acid chain; its full sequence is 4-hydroxy-tetrahydrodipicolinate reductase (263 aa).

Residue 10–15 (GASGKM) participates in NAD(+) binding. Residue R38 coordinates NADP(+). NAD(+) is bound by residues 97–99 (GTT) and 123–126 (APNF). The active-site Proton donor/acceptor is H153. H154 serves as a coordination point for (S)-2,3,4,5-tetrahydrodipicolinate. Catalysis depends on K157, which acts as the Proton donor. (S)-2,3,4,5-tetrahydrodipicolinate is bound at residue 163–164 (GT).

Belongs to the DapB family.

It localises to the cytoplasm. The enzyme catalyses (S)-2,3,4,5-tetrahydrodipicolinate + NAD(+) + H2O = (2S,4S)-4-hydroxy-2,3,4,5-tetrahydrodipicolinate + NADH + H(+). It carries out the reaction (S)-2,3,4,5-tetrahydrodipicolinate + NADP(+) + H2O = (2S,4S)-4-hydroxy-2,3,4,5-tetrahydrodipicolinate + NADPH + H(+). It functions in the pathway amino-acid biosynthesis; L-lysine biosynthesis via DAP pathway; (S)-tetrahydrodipicolinate from L-aspartate: step 4/4. In terms of biological role, catalyzes the conversion of 4-hydroxy-tetrahydrodipicolinate (HTPA) to tetrahydrodipicolinate. This is 4-hydroxy-tetrahydrodipicolinate reductase from Dehalococcoides mccartyi (strain ATCC BAA-2100 / JCM 16839 / KCTC 5957 / BAV1).